The chain runs to 221 residues: UPF0758 protein HI_0952 (221 aa).

The MPN domain maps to 99–221 (IINDPETVKL…CYSFAENCLL (123 aa)). The Zn(2+) site is built by histidine 170, histidine 172, and aspartate 183. A JAMM motif motif is present at residues 170–183 (HNHPSGITEPSYSD).

It belongs to the UPF0758 family.

In Haemophilus influenzae (strain ATCC 51907 / DSM 11121 / KW20 / Rd), this protein is UPF0758 protein HI_0952.